The primary structure comprises 264 residues: Outer kinetochore KNL1 complex subunit sos7 (264 aa).

The stretch at 90-236 forms a coiled coil; that stretch reads EAEDNEKLET…SNQIKAAIHT (147 aa).

Belongs to the KRE28 family. Component of the KNL1/SPC105 complex composed of at least spc7 and sos7. Part of the outer kinetochore KMN network that includes the KNL1, MIS12 and NDC80 complexes. Interacts (via C-terminus) with spc7 (via C-terminus); the interaction is direct.

It localises to the nucleus. The protein localises to the chromosome. The protein resides in the centromere. Its subcellular location is the kinetochore. Functionally, acts as a component of the outer kinetochore KNL1 complex that facilitates microtubule-kinetochore interactions and the spindle assembly checkpoint. Kinetochores, consisting of a centromere-associated inner segment and a microtubule-contacting outer segment, play a crucial role in chromosome segregation by mediating the physical connection between centromeric DNA and spindle microtubules. The outer kinetochore is made up of the ten-subunit KMN network, comprising the MIS12, NDC80 and KNL1 complexes, and auxiliary microtubule-associated components; together they connect the outer kinetochore with the inner kinetochore, bind microtubules, and mediate interactions with mitotic checkpoint proteins that delay anaphase until chromosomes are bioriented on the spindle. The polypeptide is Outer kinetochore KNL1 complex subunit sos7 (sos7) (Schizosaccharomyces pombe (strain 972 / ATCC 24843) (Fission yeast)).